Here is a 463-residue protein sequence, read N- to C-terminus: L-seryl-tRNA(Sec) selenium transferase (463 aa).

Residue Lys295 is modified to N6-(pyridoxal phosphate)lysine.

The protein belongs to the SelA family. As to quaternary structure, homodecamer; pentamer of dimers. Binds only one seryl-tRNA(Sec) per dimer. Pyridoxal 5'-phosphate serves as cofactor.

It localises to the cytoplasm. It catalyses the reaction L-seryl-tRNA(Sec) + selenophosphate + H(+) = L-selenocysteinyl-tRNA(Sec) + phosphate. The protein operates within aminoacyl-tRNA biosynthesis; selenocysteinyl-tRNA(Sec) biosynthesis; selenocysteinyl-tRNA(Sec) from L-seryl-tRNA(Sec) (bacterial route): step 1/1. In terms of biological role, converts seryl-tRNA(Sec) to selenocysteinyl-tRNA(Sec) required for selenoprotein biosynthesis. The chain is L-seryl-tRNA(Sec) selenium transferase from Shigella boydii serotype 18 (strain CDC 3083-94 / BS512).